The primary structure comprises 439 residues: Phosphoribosylamine--glycine ligase (439 aa).

The 209-residue stretch at 109–317 (REFMERNKIP…LVEISERIID (209 aa)) folds into the ATP-grasp domain. Residue 136–195 (IDEFGKPVVVKPLGLTGGKGVKVVGYQLKDNEEAKEYAEYLIRKDGKVLIEERTDGVEFT) participates in ATP binding. 3 residues coordinate Mg(2+): Gln275, Glu287, and Asn289. Positions 275, 287, and 289 each coordinate Mn(2+).

The protein belongs to the GARS family. Mg(2+) serves as cofactor. Requires Mn(2+) as cofactor.

It carries out the reaction 5-phospho-beta-D-ribosylamine + glycine + ATP = N(1)-(5-phospho-beta-D-ribosyl)glycinamide + ADP + phosphate + H(+). The protein operates within purine metabolism; IMP biosynthesis via de novo pathway; N(1)-(5-phospho-D-ribosyl)glycinamide from 5-phospho-alpha-D-ribose 1-diphosphate: step 2/2. The chain is Phosphoribosylamine--glycine ligase from Pyrococcus furiosus (strain ATCC 43587 / DSM 3638 / JCM 8422 / Vc1).